Here is a 1350-residue protein sequence, read N- to C-terminus: Nicotinate hydroxylase hnxS (1350 aa).

Residues Cys49, Cys54, Cys89, Cys92, Cys133, and Cys135 each coordinate [2Fe-2S] cluster. A disordered region spans residues 164 to 193 (LVGTEEETESDMGAHSGSGDTGSRSSGSCG). A compositionally biased stretch (low complexity) spans 180 to 192 (GSGDTGSRSSGSC). The FAD-binding PCMH-type domain maps to 256 to 445 (YGDAEQAWVK…TKIAVPMPSK (190 aa)). FAD is bound by residues 284–291 (LVTGASEV), 379–383 (CLAGN), Asp392, and Lys455. Residues Gln793 and Phe824 each contribute to the Mo-molybdopterin site. The substrate site is built by Glu828 and Arg906. Mo-molybdopterin is bound by residues Arg938 and Ala1107. Glu1281 acts as the Proton acceptor in catalysis.

This sequence belongs to the xanthine dehydrogenase family. [2Fe-2S] cluster serves as cofactor. Requires FAD as cofactor. It depends on Mo-molybdopterin as a cofactor.

Allopurinol inhibits catalytic activity in a linear fashion. In terms of biological role, nicotinate hydroxylase, part of the hnx cluster involved in the purine degradation. The nicotinate hydroxylase hnxS accepts nicotinate as a substrate and catalyzes the first step of nicotinate catabolism. HnxS also accepts hypoxanthine, but not xanthine, as a substrate. The major facilitator-type transporters hxnP and hxnZ are probably involved in the uptake of nicotinate-derived metabolites, and the oxidoreductases hxnT and hxnY in the further metabolism of 6-OH nicotinic acid. In Emericella nidulans (strain FGSC A4 / ATCC 38163 / CBS 112.46 / NRRL 194 / M139) (Aspergillus nidulans), this protein is Nicotinate hydroxylase hnxS.